A 293-amino-acid chain; its full sequence is 3-methyl-2-oxobutanoate hydroxymethyltransferase (293 aa).

The interval 1–26 is disordered; sequence MTQAPVTAGTPYGTIPPASPLPQRRP. Positions 68 and 111 each coordinate Mg(2+). 3-methyl-2-oxobutanoate is bound by residues 68 to 69, aspartate 111, and lysine 140; that span reads DS. Residue glutamate 142 coordinates Mg(2+). The active-site Proton acceptor is the glutamate 209.

The protein belongs to the PanB family. As to quaternary structure, homodecamer; pentamer of dimers. The cofactor is Mg(2+).

The protein resides in the cytoplasm. It carries out the reaction 3-methyl-2-oxobutanoate + (6R)-5,10-methylene-5,6,7,8-tetrahydrofolate + H2O = 2-dehydropantoate + (6S)-5,6,7,8-tetrahydrofolate. It functions in the pathway cofactor biosynthesis; (R)-pantothenate biosynthesis; (R)-pantoate from 3-methyl-2-oxobutanoate: step 1/2. Catalyzes the reversible reaction in which hydroxymethyl group from 5,10-methylenetetrahydrofolate is transferred onto alpha-ketoisovalerate to form ketopantoate. The sequence is that of 3-methyl-2-oxobutanoate hydroxymethyltransferase from Delftia acidovorans (strain DSM 14801 / SPH-1).